The following is a 447-amino-acid chain: Glutamyl-tRNA reductase (447 aa).

Substrate is bound by residues 49-52 (TCNR), Ser109, 114-116 (EQQ), and Gln120. The active-site Nucleophile is Cys50. 189-194 (GAGSMG) provides a ligand contact to NADP(+).

It belongs to the glutamyl-tRNA reductase family. Homodimer.

The catalysed reaction is (S)-4-amino-5-oxopentanoate + tRNA(Glu) + NADP(+) = L-glutamyl-tRNA(Glu) + NADPH + H(+). It participates in porphyrin-containing compound metabolism; protoporphyrin-IX biosynthesis; 5-aminolevulinate from L-glutamyl-tRNA(Glu): step 1/2. In terms of biological role, catalyzes the NADPH-dependent reduction of glutamyl-tRNA(Glu) to glutamate 1-semialdehyde (GSA). The chain is Glutamyl-tRNA reductase from Mycobacterium sp. (strain JLS).